We begin with the raw amino-acid sequence, 361 residues long: MSQKVANRSIVFYNSQSPPSVITEELDLGNCFSPSELVVKIHAAALNPVDFLLQGFAYSWLVGKGPKGFSRDYSGEVVKVGANVKDFKVGDKVSGLFQHLYGKQGTLCDYLILDPSKQPAISKISPVGHPEYDDYVINASWALVFGTAYQALHNYGQNLGPDSKVLVIGASTSVSNALIQIAKNRMKIGTVVGICSKKSFEYNKKLGYDYLAAYDDGSTVENVKQIMKNNMGNEKFDLIFDSVGNSEFFECINDVLKDKCQNSHYVSVTGDKKLNYSNPRIRDSLPGWESIRRIGPFRKYNYKLLLLKPEATFAKIGSEMIAQKQFVPAVDSVYAFEDYSKAFERLKSNKAKGKVVIQISQ.

The protein belongs to the YIM1 family.

It is found in the lipid droplet. It localises to the mitochondrion. The chain is Protein YIM1-2 (YIM1-2) from Lachancea thermotolerans (strain ATCC 56472 / CBS 6340 / NRRL Y-8284) (Yeast).